The sequence spans 621 residues: Anthranilate synthase alpha subunit 2, chloroplastic (621 aa).

Residues 1–87 (MSAVSISAVK…SEEQFTKFKK (87 aa)) constitute a chloroplast transit peptide.

Belongs to the anthranilate synthase component I family. In terms of assembly, heterotetramer consisting of two non-identical subunits: a beta subunit and a large alpha subunit.

It localises to the plastid. It is found in the chloroplast. The enzyme catalyses chorismate + L-glutamine = anthranilate + pyruvate + L-glutamate + H(+). The protein operates within amino-acid biosynthesis; L-tryptophan biosynthesis; L-tryptophan from chorismate: step 1/5. With respect to regulation, feedback inhibition by tryptophan. Functionally, part of a heterotetrameric complex that catalyzes the two-step biosynthesis of anthranilate, an intermediate in the biosynthesis of L-tryptophan. In the first step, the glutamine-binding beta subunit of anthranilate synthase (AS) provides the glutamine amidotransferase activity which generates ammonia as a substrate that, along with chorismate, is used in the second step, catalyzed by the large alpha subunit of AS to produce anthranilate. This Arabidopsis thaliana (Mouse-ear cress) protein is Anthranilate synthase alpha subunit 2, chloroplastic (ASA2).